A 257-amino-acid polypeptide reads, in one-letter code: Acetyl-coenzyme A carboxylase carboxyl transferase subunit beta (257 aa).

One can recognise a CoA carboxyltransferase N-terminal domain in the interval 5–257 (VFTKCERCKQ…DLERLLGFVG (253 aa)). Residues Cys9, Cys12, Cys28, and Cys31 each coordinate Zn(2+). Residues 9-31 (CERCKQPVYEKDLRARFNVCPNC) form a C4-type zinc finger.

It belongs to the AccD/PCCB family. In terms of assembly, acetyl-CoA carboxylase is a heterohexamer composed of biotin carboxyl carrier protein (AccB), biotin carboxylase (AccC) and two subunits each of ACCase subunit alpha (AccA) and ACCase subunit beta (AccD). It depends on Zn(2+) as a cofactor.

It is found in the cytoplasm. It carries out the reaction N(6)-carboxybiotinyl-L-lysyl-[protein] + acetyl-CoA = N(6)-biotinyl-L-lysyl-[protein] + malonyl-CoA. The protein operates within lipid metabolism; malonyl-CoA biosynthesis; malonyl-CoA from acetyl-CoA: step 1/1. Its function is as follows. Component of the acetyl coenzyme A carboxylase (ACC) complex. Biotin carboxylase (BC) catalyzes the carboxylation of biotin on its carrier protein (BCCP) and then the CO(2) group is transferred by the transcarboxylase to acetyl-CoA to form malonyl-CoA. This is Acetyl-coenzyme A carboxylase carboxyl transferase subunit beta from Rubrobacter xylanophilus (strain DSM 9941 / JCM 11954 / NBRC 16129 / PRD-1).